Here is a 634-residue protein sequence, read N- to C-terminus: Chaperone protein HtpG (634 aa).

Positions 1-344 (MSETVSHNKE…SNDLPLNVSR (344 aa)) are a; substrate-binding. The b stretch occupies residues 345-561 (EILQDNKVTQ…DFEMGTQMAK (217 aa)). A c region spans residues 562-634 (LLEAAGQAVP…GAINKLLTKV (73 aa)).

The protein belongs to the heat shock protein 90 family. Homodimer.

Its subcellular location is the cytoplasm. In terms of biological role, molecular chaperone. Has ATPase activity. In Vibrio campbellii (strain ATCC BAA-1116), this protein is Chaperone protein HtpG.